Here is a 327-residue protein sequence, read N- to C-terminus: Cyclic AMP-responsive element-binding protein 1 (327 aa).

2 disordered regions span residues 1-26 (MTMESGAENQQSGDAAVTEAENQQMT) and 94-113 (SEDSQESVDSVTDSQKRREI). A KID domain is found at 87 to 146 (QISTIAESEDSQESVDSVTDSQKRREILSRRPSYRKILNDLSSDAPGVPRIEEEKSEEET). Serine 119 bears the Phosphoserine; by CaMK1, CaMK2, CaMK4, PKB/AKT1 or PKB/AKT2, RPS6KA3, RPS6KA4, RPS6KA5, SGK1 and TSSK4 mark. A Glycyl lysine isopeptide (Lys-Gly) (interchain with G-Cter in SUMO2) cross-link involves residue lysine 122. Residues 125–148 (NDLSSDAPGVPRIEEEKSEEETSA) form a disordered region. At serine 128 the chain carries Phosphoserine. A Phosphoserine; by HIPK2 modification is found at serine 257. A bZIP domain is found at 269–327 (ARKREVRLMKNREAARECRRKKKEYVKCLENRVAVLENQNKTLIEELKALKDLYCHKSD). The tract at residues 270-295 (RKREVRLMKNREAARECRRKKKEYVK) is basic motif. Residues lysine 271 and lysine 290 each participate in a glycyl lysine isopeptide (Lys-Gly) (interchain with G-Cter in SUMO1) cross-link. Residues 297-318 (LENRVAVLENQNKTLIEELKAL) form a leucine-zipper region.

The protein belongs to the bZIP family. As to quaternary structure, interacts with PPRC1. Binds DNA as a dimer. This dimer is stabilized by magnesium ions. Interacts, through the bZIP domain, with the coactivators CRTC1/TORC1, CRTC2/TORC2 and CRTC3/TORC3. When phosphorylated on Ser-119, binds CREBBP. Interacts with CREBL2; regulates CREB1 phosphorylation, stability and transcriptional activity. Interacts (phosphorylated form) with TOX3. Interacts with ARRB1. Binds to HIPK2. Interacts with SGK1. Interacts with TSSK4; this interaction facilitates phosphorylation on Ser-119. Forms a complex with KMT2A and CREBBP. Interacts with TOX4; CREB1 is required for full induction of TOX4-dependent activity and the interaction is increased by cAMP and inhibited by insulin. In terms of assembly, (Microbial infection) Interacts with hepatitis B virus/HBV protein X. (Microbial infection) Interacts with HTLV-1 protein Tax. In terms of processing, stimulated by phosphorylation. Phosphorylation of both Ser-119 and Ser-128 in the SCN regulates the activity of CREB and participates in circadian rhythm generation. Phosphorylation of Ser-119 allows CREBBP binding. In liver, phosphorylation is induced by fasting or glucagon in a circadian fashion. CREBL2 positively regulates phosphorylation at Ser-119 thereby stimulating CREB1 transcriptional activity. Phosphorylated upon calcium influx by CaMK4 and CaMK2 on Ser-119. CaMK4 is much more potent than CaMK2 in activating CREB. Phosphorylated by CaMK2 on Ser-128. Phosphorylation of Ser-128 blocks CREB-mediated transcription even when Ser-119 is phosphorylated. Phosphorylated by CaMK1. Phosphorylation of Ser-257 by HIPK2 in response to genotoxic stress promotes CREB1 activity, facilitating the recruitment of the coactivator CBP. Phosphorylated at Ser-119 by RPS6KA3, RPS6KA4 and RPS6KA5 in response to mitogenic or stress stimuli. Phosphorylated by TSSK4 on Ser-119. Post-translationally, sumoylated with SUMO1. Sumoylation on Lys-290, but not on Lys-271, is required for nuclear localization of this protein. Sumoylation is enhanced under hypoxia, promoting nuclear localization and stabilization.

It is found in the nucleus. Functionally, phosphorylation-dependent transcription factor that stimulates transcription upon binding to the DNA cAMP response element (CRE), a sequence present in many viral and cellular promoters. Transcription activation is enhanced by the TORC coactivators which act independently of Ser-119 phosphorylation. Involved in different cellular processes including the synchronization of circadian rhythmicity and the differentiation of adipose cells. Regulates the expression of apoptotic and inflammatory response factors in cardiomyocytes in response to ERFE-mediated activation of AKT signaling. The chain is Cyclic AMP-responsive element-binding protein 1 (CREB1) from Homo sapiens (Human).